Consider the following 221-residue polypeptide: Transcription factor MYB1 (221 aa).

HTH myb-type domains lie at 1–57 (MESV…LNYL) and 58–112 (RPNI…QKKL). 2 DNA-binding regions (H-T-H motif) span residues 33–57 (WHQV…LNYL) and 85–108 (WSLI…NTHL). Positions 126–154 (KTIVPKGTEAQPRAHPKSPPRPSPPSNNE) are disordered.

Expressed in stems and leaves. Expressed at low levels in ovaries.

It localises to the nucleus. Functionally, transcription activator involved in the regulation of anthocyanin biosynthesis in red-fleshed kiwifruit varieties. Activates the transcription of genes involved in anthocyanin biosynthesis, such as dihydroflavonol reductase (DFR), anthocyanidin synthase (ANS) and UDP flavonoid glycosyltransferase (UFGT). The sequence is that of Transcription factor MYB1 from Actinidia chinensis var. chinensis (Chinese soft-hair kiwi).